The following is a 499-amino-acid chain: Trichothecene C-4 hydroxylase (499 aa).

Residues 7 to 29 (VGVAVQLVLTVLLASIPLRVIWN) traverse the membrane as a helical segment. 2 N-linked (GlcNAc...) asparagine glycosylation sites follow: N173 and N287. Position 442 (C442) interacts with heme. N-linked (GlcNAc...) asparagine glycosylation is present at N473.

The protein belongs to the cytochrome P450 family. Heme is required as a cofactor.

Its subcellular location is the membrane. The protein operates within sesquiterpene biosynthesis; trichothecene biosynthesis. Trichothecene C-4 hydroxylase; part of the gene cluster that mediates the production of the antimicrobial trichothecene harzianum A (HA) that plays a role in Botrytis cinerea antagonistic activity and plant defense priming. The biosynthesis of harzianum A begins with the cyclization of farnesyl diphosphate to trichodiene and is catalyzed by the trichodiene synthase TRI5. Trichodiene undergoes a series of oxygenations catalyzed by the cytochrome P450 monooxygenase TRI4. TRI4 controls the addition of 3 oxygens at C-2, C-11, and the C-12, C-13-epoxide to form the intermediate isotrichodiol. Isotrichodiol then undergoes a non-enzymatic isomerization and cyclization to form 12,13-epoxytrichothec-9-ene (EPT) which is further converted to trichodermol by the cytochrome P450 monooxygenase TRI11 via C-4 hydroxylation. The last step of HA synthesis is esterification of an octatriendioyl moiety to the C-4 oxygen of trichodermol. The octatriendioyl moiety is probably produced by the polyketide synthase TRI17 and the esterification performed by the trichothecene O-acetyltransferase TRI3. This Trichoderma arundinaceum protein is Trichothecene C-4 hydroxylase.